Here is a 484-residue protein sequence, read N- to C-terminus: MWYVSTRGVAPRVNFEGALFSGYAPDGGLFMPEELPQLDRGTLCQWSTLSYPGLVKELCALFIGSELLPKDELNDLIDRAFSRFRHREVVHLSRLRNGLNVLELWHGVTYAFKDLSLSCTTQFLQYFLEKREKHVTVVVGTSGDTGSAAIESVQGAKNMDIIVLLPKGHCTKIQELQMTTVLKQNVHVFGVEGNSDELDEPIKTVFADVAFVKKHNLMSLNSINWSRVLVQMAHHFFAYFQCTPSLDTHPLPLVEVVVPTGAAGNLAAGYIAQKIGLPIRLVVAVNRNDIIHRTVQQGDFSLSEAVKSTLASAMDIQVPYNMERVFWLLSGSDSQVTRALMEQFERTQSVNLPKELHSKLSEAVTSVSVSDEAITQTMGRCWDENQYLLCPHSAVAVNYHYQQIDRQQPSTPRCCLAPASAAKFPEAVLAAGLTPETPAEIVALEHKETRCTLMRRGDNWMLMLRDTIEDLSRQWRSHALNTSQ.

At K113 the chain carries N6-(pyridoxal phosphate)lysine.

It belongs to the threonine synthase family. Requires pyridoxal 5'-phosphate as cofactor.

It localises to the secreted. Acts as a catabolic phospho-lyase on both gamma- and beta-phosphorylated substrates. Degrades O-phospho-threonine (PThr) to alpha-ketobutyrate, ammonia and phosphate. Its function is as follows. Potent inducer of osteoblastic production of IL6. May act to exacerbate inflammation and/or bone turnover under inflammatory conditions. In Homo sapiens (Human), this protein is Threonine synthase-like 2 (THNSL2).